The sequence spans 292 residues: MSPDLKKLKELRERTNSGLLDCKNALEATDNDIEKAIKWLQENGIIKAAKKSARIAAEGITKAYIKDNVAVLFELNAETDFVARNQLFIDLANKIQDALAANDFSDIEAANKVKIDGMTIEESCQDLTAKIGEKITLRRAEKFVAKPGEVVAGYTHANSRVADIAIAKGANQEALRHVTMHIAALNPSHLFESCLPKAQHDEIVNRINSDPKLANKPEKIQESMKAGMLKKEFNELGVLMFQPFVMEDSKTVAKYLEENQLTLLDATRYEVGEGIEKKVVDFAAEVAEQMKQ.

The tract at residues 79-82 (TDFV) is involved in Mg(2+) ion dislocation from EF-Tu.

This sequence belongs to the EF-Ts family.

The protein localises to the cytoplasm. In terms of biological role, associates with the EF-Tu.GDP complex and induces the exchange of GDP to GTP. It remains bound to the aminoacyl-tRNA.EF-Tu.GTP complex up to the GTP hydrolysis stage on the ribosome. This is Elongation factor Ts from Metamycoplasma arthritidis (strain 158L3-1) (Mycoplasma arthritidis).